Here is a 157-residue protein sequence, read N- to C-terminus: SsrA-binding protein (157 aa).

A compositionally biased stretch (basic and acidic residues) spans histidine 134 to arginine 151. The interval histidine 134–glycine 157 is disordered.

It belongs to the SmpB family.

Its subcellular location is the cytoplasm. Required for rescue of stalled ribosomes mediated by trans-translation. Binds to transfer-messenger RNA (tmRNA), required for stable association of tmRNA with ribosomes. tmRNA and SmpB together mimic tRNA shape, replacing the anticodon stem-loop with SmpB. tmRNA is encoded by the ssrA gene; the 2 termini fold to resemble tRNA(Ala) and it encodes a 'tag peptide', a short internal open reading frame. During trans-translation Ala-aminoacylated tmRNA acts like a tRNA, entering the A-site of stalled ribosomes, displacing the stalled mRNA. The ribosome then switches to translate the ORF on the tmRNA; the nascent peptide is terminated with the 'tag peptide' encoded by the tmRNA and targeted for degradation. The ribosome is freed to recommence translation, which seems to be the essential function of trans-translation. In Rhodopseudomonas palustris (strain BisA53), this protein is SsrA-binding protein.